The following is a 132-amino-acid chain: MPLYEHVFISRQDLSNAQAEGLIEHFSTVLADNGGKVVDREYWGVKTMAYKINKNRKGHYAFLKSDAPSAAVQEMERLMRLHDDVMRVLTIKVDKHAEGPSIQMQKRDERERGDRGDRPDRGDRGERGGFRR.

The segment at 96–132 (HAEGPSIQMQKRDERERGDRGDRPDRGDRGERGGFRR) is disordered. Positions 105–132 (QKRDERERGDRGDRPDRGDRGERGGFRR) are enriched in basic and acidic residues.

Belongs to the bacterial ribosomal protein bS6 family.

Binds together with bS18 to 16S ribosomal RNA. This is Small ribosomal subunit protein bS6 from Cereibacter sphaeroides (strain ATCC 17025 / ATH 2.4.3) (Rhodobacter sphaeroides).